A 293-amino-acid chain; its full sequence is Small ribosomal subunit protein uS2 (293 aa).

The interval 239–293 (PAGGADWEAAPAGFPAAATGEWSEAQPATWESGAAAATGPSTEWADSAPKDTAGW) is disordered. The span at 247–256 (AAPAGFPAAA) shows a compositional bias: low complexity.

It belongs to the universal ribosomal protein uS2 family. Component of the small ribosomal subunit. Mature ribosomes consist of a small (40S) and a large (60S) subunit. The 40S subunit contains about 33 different proteins and 1 molecule of RNA (18S). The 60S subunit contains about 49 different proteins and 3 molecules of RNA (25S, 5.8S and 5S). Interacts with RPS21.

The protein localises to the cytoplasm. Its function is as follows. Required for the assembly and/or stability of the 40S ribosomal subunit. Required for the processing of the 20S rRNA-precursor to mature 18S rRNA in a late step of the maturation of 40S ribosomal subunits. The sequence is that of Small ribosomal subunit protein uS2 from Chaetomium globosum (strain ATCC 6205 / CBS 148.51 / DSM 1962 / NBRC 6347 / NRRL 1970) (Soil fungus).